The following is a 123-amino-acid chain: Small ribosomal subunit protein uS12 (123 aa).

3-methylthioaspartic acid is present on D89.

This sequence belongs to the universal ribosomal protein uS12 family. Part of the 30S ribosomal subunit. Contacts proteins S8 and S17. May interact with IF1 in the 30S initiation complex.

With S4 and S5 plays an important role in translational accuracy. Functionally, interacts with and stabilizes bases of the 16S rRNA that are involved in tRNA selection in the A site and with the mRNA backbone. Located at the interface of the 30S and 50S subunits, it traverses the body of the 30S subunit contacting proteins on the other side and probably holding the rRNA structure together. The combined cluster of proteins S8, S12 and S17 appears to hold together the shoulder and platform of the 30S subunit. The protein is Small ribosomal subunit protein uS12 of Granulibacter bethesdensis (strain ATCC BAA-1260 / CGDNIH1).